A 96-amino-acid polypeptide reads, in one-letter code: MRAIIFVLIFAIAFAATREGAILCNLCKDTVKLVENLLTVDGAQAVRQYIDNLCGKASGFLGTLCEKILSFGVDELVKLIENHVDPVVVCEKIHAC.

Residues 1–19 (MRAIIFVLIFAIAFAATRE) form the signal peptide. Residues 20-96 (GAILCNLCKD…VVVCEKIHAC (77 aa)) enclose the Saposin B-type domain. 3 disulfide bridges follow: cysteine 24–cysteine 96, cysteine 27–cysteine 90, and cysteine 54–cysteine 65.

As to quaternary structure, monomer. Homodimer. Hexamer; formed during insertion in the membrane.

The protein resides in the cytoplasmic granule. Its function is as follows. Forms pores in the cell membrane of host cells. Has antibacterial activity against M.luteus, no activity against E.coli. Implicated in the cytolytic activity of the parasite. The sequence is that of Pore-forming peptide amoebapore B from Entamoeba histolytica (strain ATCC 30459 / HM-1:IMSS / ABRM).